We begin with the raw amino-acid sequence, 388 residues long: S-adenosylmethionine synthase (388 aa).

H16 serves as a coordination point for ATP. D18 contributes to the Mg(2+) binding site. Residue E44 coordinates K(+). L-methionine contacts are provided by E57 and Q100. A flexible loop region spans residues 100–110 (QSPDIAQGVDK). ATP-binding positions include 167-169 (DAK), 233-234 (RF), D242, 248-249 (RK), A265, and K269. Residue D242 coordinates L-methionine. Residue K273 coordinates L-methionine.

Belongs to the AdoMet synthase family. In terms of assembly, homotetramer; dimer of dimers. Requires Mg(2+) as cofactor. It depends on K(+) as a cofactor.

Its subcellular location is the cytoplasm. It catalyses the reaction L-methionine + ATP + H2O = S-adenosyl-L-methionine + phosphate + diphosphate. It functions in the pathway amino-acid biosynthesis; S-adenosyl-L-methionine biosynthesis; S-adenosyl-L-methionine from L-methionine: step 1/1. Its function is as follows. Catalyzes the formation of S-adenosylmethionine (AdoMet) from methionine and ATP. The overall synthetic reaction is composed of two sequential steps, AdoMet formation and the subsequent tripolyphosphate hydrolysis which occurs prior to release of AdoMet from the enzyme. This chain is S-adenosylmethionine synthase, found in Polynucleobacter necessarius subsp. necessarius (strain STIR1).